The following is a 243-amino-acid chain: MSKTHFGFESVEETEKAKKVAGVFHSVASNYDLMNDLMSAGMHRAWKAFTIAQANVRPGFKVLDIAAGTGDLTRAFAKAAGPTGEVWHTDINESMLRVGRDRLLDKGVVTPSLLCDAEKLPFPNNYFDVVTVAFGLRNMTHKDAALAEMRRVAKPGGRVMVLEFSKVWEPLKKAYDLYSFKVLPWLGDRFAKDADSYRYLAESIRMHPDQDTLKTMMEQAGLDAVKYYNLSGGVVALHVGSKY.

S-adenosyl-L-methionine-binding positions include T69, D90, and 116-117 (DA).

The protein belongs to the class I-like SAM-binding methyltransferase superfamily. MenG/UbiE family.

It carries out the reaction a 2-demethylmenaquinol + S-adenosyl-L-methionine = a menaquinol + S-adenosyl-L-homocysteine + H(+). It catalyses the reaction a 2-methoxy-6-(all-trans-polyprenyl)benzene-1,4-diol + S-adenosyl-L-methionine = a 5-methoxy-2-methyl-3-(all-trans-polyprenyl)benzene-1,4-diol + S-adenosyl-L-homocysteine + H(+). Its pathway is quinol/quinone metabolism; menaquinone biosynthesis; menaquinol from 1,4-dihydroxy-2-naphthoate: step 2/2. It functions in the pathway cofactor biosynthesis; ubiquinone biosynthesis. Methyltransferase required for the conversion of demethylmenaquinol (DMKH2) to menaquinol (MKH2) and the conversion of 2-polyprenyl-6-methoxy-1,4-benzoquinol (DDMQH2) to 2-polyprenyl-3-methyl-6-methoxy-1,4-benzoquinol (DMQH2). The polypeptide is Ubiquinone/menaquinone biosynthesis C-methyltransferase UbiE (Burkholderia vietnamiensis (strain G4 / LMG 22486) (Burkholderia cepacia (strain R1808))).